Reading from the N-terminus, the 300-residue chain is Protein YIF1B (300 aa).

The interval 1 to 46 (MNQESSFRAPPKRRVRGPNPNISTPHQLFDDTSGGPVPHGGEYPNH) is disordered. At 1-142 (MNQESSFRAP…APRFDINAPD (142 aa)) the chain is on the cytoplasmic side. A helical membrane pass occupies residues 143–163 (LYIPVMAFITYILVAGLALGT). Over 164–178 (QSRFSPEILGMQASS) the chain is Extracellular. Residues 179–199 (ALAWLIVEVLAILLSLYLVTV) form a helical membrane-spanning segment. Residues 200–205 (NTDLTT) are Cytoplasmic-facing. The chain crosses the membrane as a helical span at residues 206–226 (VDLVAFSGYKYVGMISGVISG). Leu227 is a topological domain (extracellular). A helical transmembrane segment spans residues 228–248 (LFGKTGYYVVLSWCGISVVFF). Over 249–278 (MIRTLRLKILSEAAAEGVLVRGARNQLRMY) the chain is Cytoplasmic. A helical transmembrane segment spans residues 279–299 (LTMAIAAVQPIFMYWLTYHLV). Position 300 (Arg300) is a topological domain, extracellular.

Belongs to the YIF1 family.

The protein localises to the endoplasmic reticulum membrane. It is found in the golgi apparatus membrane. It localises to the endoplasmic reticulum-Golgi intermediate compartment membrane. Functions in endoplasmic reticulum to Golgi vesicle-mediated transport and regulates the proper organization of the endoplasmic reticulum and the Golgi. Plays a key role in targeting to neuronal dendrites receptors such as HTR1A. Plays also a role in primary cilium and sperm flagellum assembly probably through protein transport to these compartments. This Xenopus tropicalis (Western clawed frog) protein is Protein YIF1B (yif1b).